The sequence spans 141 residues: MAYLLHAQLFLLTTFILVLNMRLCPVLGHFLGGIEKSSMEEEGASEALNYAVNEYNEKNSDLYLSRVVEVKDVQKQVVAGTKFFFDVILGKTICLKTQGDLTNCPLNEEADQQEHEFCSFVVHDIPWENYIVLLSSSCHSI.

A signal peptide spans 1 to 27 (MAYLLHAQLFLLTTFILVLNMRLCPVL). The Secondary area of contact signature appears at 76 to 80 (QVVAG). 2 cysteine pairs are disulfide-bonded: Cys94/Cys104 and Cys118/Cys138.

This sequence belongs to the cystatin family. Found in saliva, tears, urine and seminal fluid.

The protein localises to the secreted. Functionally, this protein strongly inhibits papain and ficin, partially inhibits stem bromelain and bovine cathepsin C, but does not inhibit porcine cathepsin B or clostripain. Papain is inhibited non-competitively. The polypeptide is Cystatin-S (Cst4) (Rattus norvegicus (Rat)).